Consider the following 247-residue polypeptide: MSDPLILIPARLAATRLPSKPLADIAGVPMIVHVWRRAVEAGIGPVVVATDTDAVAEVIEAQGGLAVMTRPDHPSGSDRLAEALEIVDPDGNHDVVVNVQGDLPTIDPAIIAASVMPLADPQVDIATLCAVIHRPEEMDDPNVVKIIGHTVGPNRLRALAFTRARAPWGDGPLFHHIGLYAYRRKALARFVALPQGELEQREKLEQLRALEAGMRIDAMIVEDLPLGVDTPADLERARTLLAIRRLN.

Belongs to the KdsB family.

It is found in the cytoplasm. It carries out the reaction 3-deoxy-alpha-D-manno-oct-2-ulosonate + CTP = CMP-3-deoxy-beta-D-manno-octulosonate + diphosphate. It functions in the pathway nucleotide-sugar biosynthesis; CMP-3-deoxy-D-manno-octulosonate biosynthesis; CMP-3-deoxy-D-manno-octulosonate from 3-deoxy-D-manno-octulosonate and CTP: step 1/1. It participates in bacterial outer membrane biogenesis; lipopolysaccharide biosynthesis. In terms of biological role, activates KDO (a required 8-carbon sugar) for incorporation into bacterial lipopolysaccharide in Gram-negative bacteria. The protein is 3-deoxy-manno-octulosonate cytidylyltransferase of Methylorubrum extorquens (strain PA1) (Methylobacterium extorquens).